Here is a 362-residue protein sequence, read N- to C-terminus: 2-aminoethylphosphonate--pyruvate transaminase (362 aa).

The residue at position 193 (lysine 193) is an N6-(pyridoxal phosphate)lysine.

This sequence belongs to the class-V pyridoxal-phosphate-dependent aminotransferase family. PhnW subfamily. Homodimer. Requires pyridoxal 5'-phosphate as cofactor.

It carries out the reaction (2-aminoethyl)phosphonate + pyruvate = phosphonoacetaldehyde + L-alanine. Its function is as follows. Involved in phosphonate degradation. The sequence is that of 2-aminoethylphosphonate--pyruvate transaminase from Bacteroides fragilis (strain YCH46).